Reading from the N-terminus, the 507-residue chain is ATP synthase subunit alpha, chloroplastic (507 aa).

Position 170 to 177 (170 to 177) interacts with ATP; the sequence is GDRQTGKT. Thr-257 is modified (phosphothreonine).

It belongs to the ATPase alpha/beta chains family. As to quaternary structure, F-type ATPases have 2 components, CF(1) - the catalytic core - and CF(0) - the membrane proton channel. CF(1) has five subunits: alpha(3), beta(3), gamma(1), delta(1), epsilon(1). CF(0) has four main subunits: a, b, b' and c.

It localises to the plastid. The protein localises to the chloroplast thylakoid membrane. The enzyme catalyses ATP + H2O + 4 H(+)(in) = ADP + phosphate + 5 H(+)(out). Functionally, produces ATP from ADP in the presence of a proton gradient across the membrane. The alpha chain is a regulatory subunit. The sequence is that of ATP synthase subunit alpha, chloroplastic from Crucihimalaya wallichii (Rock-cress).